The following is a 424-amino-acid chain: Insertion element IS2A uncharacterized 48.2 kDa protein (424 aa).

Residues 229–412 (KPAVPPSKRA…SPREYLRHGA (184 aa)) enclose the Integrase catalytic domain.

This sequence belongs to the transposase 8 family.

This Escherichia coli protein is Insertion element IS2A uncharacterized 48.2 kDa protein.